Reading from the N-terminus, the 257-residue chain is 5'-nucleotidase SurE (257 aa).

4 residues coordinate a divalent metal cation: Asp-15, Asp-16, Ser-46, and Asn-99.

It belongs to the SurE nucleotidase family. Requires a divalent metal cation as cofactor.

It is found in the cytoplasm. It carries out the reaction a ribonucleoside 5'-phosphate + H2O = a ribonucleoside + phosphate. Functionally, nucleotidase that shows phosphatase activity on nucleoside 5'-monophosphates. This Aliivibrio fischeri (strain ATCC 700601 / ES114) (Vibrio fischeri) protein is 5'-nucleotidase SurE.